The sequence spans 156 residues: Ribonuclease ageritin (156 aa).

The signal sequence occupies residues 1-21 (MSESSTFTTAVVPEGEGVAPM). His-98 is a catalytic residue. N-linked (GlcNAc...) asparagine glycosylation is found at Asn-100 and Asn-139.

It belongs to the ribotoxin-like family. Monomer. Mg(2+) serves as cofactor.

It localises to the vacuole lumen. The catalysed reaction is a 28S rRNA containing guanosine-adenosine pair + H2O = an [RNA fragment]-3'-adenosine-3'-phosphate + a 5'-a hydroxy-guanosine-3'-[RNA fragment].. In contrast to most ribotoxins, activity is completely inhibited by EDTA. Its function is as follows. Fungal ribonuclease involved in fungal defense. Highly specific and highly toxic fungal endonuclease that cleaves a single phosphodiester bond in the 28S RNA of eukaryotic ribosomes at a universally conserved GAGA tetraloop of the sarcin-ricin loop (SRL). The damage of the SRL inhibits the binding of translation elongation factors and halts protein biosynthesis, ultimately resulting in the death of the target cells. Shows antitumor activity. Exerts cytotoxicity and induces apoptosis towards rat glial cells and human glioma cells, and also displays some activity towards human neurolastoma cell lines. Shows a strong entomotoxicity against Aedes aegypti larvae, yet no nematotoxicity against nematodes. In Cyclocybe aegerita (Black poplar mushroom), this protein is Ribonuclease ageritin.